Consider the following 195-residue polypeptide: Xanthine phosphoribosyltransferase (195 aa).

Xanthine-binding residues include leucine 20 and asparagine 27. 128–132 (ANGQA) provides a ligand contact to 5-phospho-alpha-D-ribose 1-diphosphate. Lysine 156 is a binding site for xanthine.

The protein belongs to the purine/pyrimidine phosphoribosyltransferase family. Xpt subfamily. Homodimer.

The protein localises to the cytoplasm. The enzyme catalyses XMP + diphosphate = xanthine + 5-phospho-alpha-D-ribose 1-diphosphate. It participates in purine metabolism; XMP biosynthesis via salvage pathway; XMP from xanthine: step 1/1. Its function is as follows. Converts the preformed base xanthine, a product of nucleic acid breakdown, to xanthosine 5'-monophosphate (XMP), so it can be reused for RNA or DNA synthesis. This chain is Xanthine phosphoribosyltransferase, found in Latilactobacillus sakei subsp. sakei (strain 23K) (Lactobacillus sakei subsp. sakei).